Here is a 1044-residue protein sequence, read N- to C-terminus: Translation initiation factor IF-2 (1044 aa).

Positions 55–458 (EAQEGQGAGK…KRKASAQERR (404 aa)) are disordered. The segment covering 57 to 77 (QEGQGAGKSAAKSAKPAAQPK) has biased composition (low complexity). Residues 104–146 (LSEKRERRPLTERRPLAERRPLAERPLVDRPVTERPLAERPAA) are compositionally biased toward basic and acidic residues. Low complexity-rich tracts occupy residues 147 to 168 (ELRP…AQPV), 190 to 231 (KAQP…QKPA), and 254 to 265 (ASSRPASAAPAA). Basic and acidic residues predominate over residues 267-281 (GEKRPAAAAERREEP). 2 stretches are compositionally biased toward low complexity: residues 352–375 (AAGQ…AGAP) and 383–395 (APQR…APLA). Residues 399–444 (LDPKVAEQAKAGEGKPRYGQSGDKRRADLYDRREHPSSQPSEEKLF) are compositionally biased toward basic and acidic residues. The tr-type G domain maps to 546 to 714 (PRHPVVTIMG…ILVLAEVSDL (169 aa)). The segment at 555 to 562 (GHVDHGKT) is G1. Residue 555–562 (GHVDHGKT) coordinates GTP. The segment at 580–584 (GITQH) is G2. The G3 stretch occupies residues 601 to 604 (DTPG). GTP is bound by residues 601-605 (DTPGH) and 655-658 (NKID). Residues 655–658 (NKID) are G4. A G5 region spans residues 691–693 (SAK).

This sequence belongs to the TRAFAC class translation factor GTPase superfamily. Classic translation factor GTPase family. IF-2 subfamily.

The protein resides in the cytoplasm. Functionally, one of the essential components for the initiation of protein synthesis. Protects formylmethionyl-tRNA from spontaneous hydrolysis and promotes its binding to the 30S ribosomal subunits. Also involved in the hydrolysis of GTP during the formation of the 70S ribosomal complex. This Symbiobacterium thermophilum (strain DSM 24528 / JCM 14929 / IAM 14863 / T) protein is Translation initiation factor IF-2.